The following is a 177-amino-acid chain: Large ribosomal subunit protein uL6 (177 aa).

The protein belongs to the universal ribosomal protein uL6 family. As to quaternary structure, part of the 50S ribosomal subunit.

In terms of biological role, this protein binds to the 23S rRNA, and is important in its secondary structure. It is located near the subunit interface in the base of the L7/L12 stalk, and near the tRNA binding site of the peptidyltransferase center. The polypeptide is Large ribosomal subunit protein uL6 (Polynucleobacter necessarius subsp. necessarius (strain STIR1)).